A 625-amino-acid chain; its full sequence is Ankyrin repeat domain-containing protein oryK (625 aa).

ANK repeat units follow at residues 1–27, 31–60, 62–89, 90–119, 162–195, 202–232, 500–530, 534–562, and 568–598; these read MDIYEAASQGRIDAIKFAVEQGCDVDG, DGKTPLWFAVQSGQPEACRFLMSLGAGRGP, NPSLLEVAVGGGYADIVALLWPHCNAER, EHRSLKTAISLGFHEIADFLIETGAFEYQD, FFDYALLLATKAGRNAGLRLVEFLLGESMPDVNC, QFETPLTAAAEKGNLEILATLIDHPNIDLTI, DTRCPLSWAAKSHNAPLVNALLRSPQVNVNF, SDRTPLLYAIAVNDRPIVERLLNHRDIDL, and EGRTAIFYAAQGGDLSIVQLLIGTQNVDFSI.

The protein operates within secondary metabolite biosynthesis. Ankyrin repeat domain-containing protein; part of the gene cluster that mediates the biosynthesis of oryzines, natural products with an unusual maleidride backbone. The two subunits of the fungal fatty acid synthase oryfasA and oryfasB probably form octenoic acid. This fatty acid is most likely activated by the acyl-CoA ligase oryP to give octenyl-CoA before the citrate synthase-like protein oryE catalyzes condensation with oxaloacetate to form tricarboxylic acid. The next steps of the pathways are conjectural, but a favorite possible route has been proposed, beginning with decarboxylation and concomitant dehydration by the decarboxylase oryM, followed by tautomerization, which may lead to the production of a diene intermediate. Reduction of this diene intermediate could give the known metabolite piliformic acid. On the pathway to oryzine B and oryzine A, however, hydroxylation of the diene by the alpha-ketoglutarate-dependent dioxygenase oryG and lactonisation by the lactonohydrolases oryH or oryL could give oryzine B directly. Finally, enoyl reduction by the dehydrogenase oryD would then convert oryzine B into oryzine A. The polypeptide is Ankyrin repeat domain-containing protein oryK (Aspergillus oryzae (strain ATCC 42149 / RIB 40) (Yellow koji mold)).